The chain runs to 386 residues: Ribonuclease D (386 aa).

A 3'-5' exonuclease domain is found at 3 to 174 (HTITTTDELA…EIYEYLSAEL (172 aa)). The region spanning 213–294 (SGRVVAIAQQ…ARGMSVPNSE (82 aa)) is the HRDC domain.

This sequence belongs to the RNase D family. A divalent metal cation is required as a cofactor.

Its subcellular location is the cytoplasm. It carries out the reaction Exonucleolytic cleavage that removes extra residues from the 3'-terminus of tRNA to produce 5'-mononucleotides.. In terms of biological role, exonuclease involved in the 3' processing of various precursor tRNAs. Initiates hydrolysis at the 3'-terminus of an RNA molecule and releases 5'-mononucleotides. The chain is Ribonuclease D from Jannaschia sp. (strain CCS1).